The following is a 429-amino-acid chain: Enolase (429 aa).

(2R)-2-phosphoglycerate is bound at residue Gln163. The Proton donor role is filled by Glu205. 3 residues coordinate Mg(2+): Asp242, Glu286, and Asp313. Positions 338, 367, 368, and 389 each coordinate (2R)-2-phosphoglycerate. The active-site Proton acceptor is the Lys338.

The protein belongs to the enolase family. Requires Mg(2+) as cofactor.

It localises to the cytoplasm. Its subcellular location is the secreted. The protein resides in the cell surface. The catalysed reaction is (2R)-2-phosphoglycerate = phosphoenolpyruvate + H2O. It functions in the pathway carbohydrate degradation; glycolysis; pyruvate from D-glyceraldehyde 3-phosphate: step 4/5. In terms of biological role, catalyzes the reversible conversion of 2-phosphoglycerate (2-PG) into phosphoenolpyruvate (PEP). It is essential for the degradation of carbohydrates via glycolysis. The polypeptide is Enolase (Citrifermentans bemidjiense (strain ATCC BAA-1014 / DSM 16622 / JCM 12645 / Bem) (Geobacter bemidjiensis)).